The chain runs to 370 residues: Anhydro-N-acetylmuramic acid kinase (370 aa).

13–20 serves as a coordination point for ATP; the sequence is GTSMDGVD.

This sequence belongs to the anhydro-N-acetylmuramic acid kinase family.

The catalysed reaction is 1,6-anhydro-N-acetyl-beta-muramate + ATP + H2O = N-acetyl-D-muramate 6-phosphate + ADP + H(+). The protein operates within amino-sugar metabolism; 1,6-anhydro-N-acetylmuramate degradation. It functions in the pathway cell wall biogenesis; peptidoglycan recycling. Catalyzes the specific phosphorylation of 1,6-anhydro-N-acetylmuramic acid (anhMurNAc) with the simultaneous cleavage of the 1,6-anhydro ring, generating MurNAc-6-P. Is required for the utilization of anhMurNAc either imported from the medium or derived from its own cell wall murein, and thus plays a role in cell wall recycling. In Shewanella frigidimarina (strain NCIMB 400), this protein is Anhydro-N-acetylmuramic acid kinase.